Reading from the N-terminus, the 139-residue chain is MAQAAKKQNLGMGRRKTSSARVFLRSGTGQIIINGLPLDEYFGRETARMVVRQPLVKLDVQSRFDVYATVQGGGDSGQAGAIRHGITRALIQYDEEGGEGGTWRSTLRKAGFVTRDPRMVERKKVGLHGARRGTQFSKR.

This sequence belongs to the universal ribosomal protein uS9 family.

This Coxiella burnetii (strain CbuK_Q154) (Coxiella burnetii (strain Q154)) protein is Small ribosomal subunit protein uS9.